The sequence spans 207 residues: Histidine biosynthesis bifunctional protein HisIE (207 aa).

The interval 1–117 (MSLVTTINWE…GKQEQPALVF (117 aa)) is phosphoribosyl-AMP cyclohydrolase. Residues 118–207 (LHQLEQVLAN…TEKLQERHNK (90 aa)) are phosphoribosyl-ATP pyrophosphohydrolase.

In the N-terminal section; belongs to the PRA-CH family. The protein in the C-terminal section; belongs to the PRA-PH family.

The protein localises to the cytoplasm. It catalyses the reaction 1-(5-phospho-beta-D-ribosyl)-ATP + H2O = 1-(5-phospho-beta-D-ribosyl)-5'-AMP + diphosphate + H(+). The catalysed reaction is 1-(5-phospho-beta-D-ribosyl)-5'-AMP + H2O = 1-(5-phospho-beta-D-ribosyl)-5-[(5-phospho-beta-D-ribosylamino)methylideneamino]imidazole-4-carboxamide. It functions in the pathway amino-acid biosynthesis; L-histidine biosynthesis; L-histidine from 5-phospho-alpha-D-ribose 1-diphosphate: step 2/9. It participates in amino-acid biosynthesis; L-histidine biosynthesis; L-histidine from 5-phospho-alpha-D-ribose 1-diphosphate: step 3/9. In Photobacterium profundum (strain SS9), this protein is Histidine biosynthesis bifunctional protein HisIE.